The chain runs to 360 residues: D-alanine--D-alanine ligase (360 aa).

The ATP-grasp domain maps to 149–353; it reads KKLMAAEGLP…YEELLDVLVQ (205 aa). 176–231 contributes to the ATP binding site; sequence KNLLGLPVFVKPARGGSSIGISRVTAWEDFNKAVGLARAHDEKVIVESEIVGSEVE. Mg(2+)-binding residues include Asp308, Glu320, and Asn322.

Belongs to the D-alanine--D-alanine ligase family. It depends on Mg(2+) as a cofactor. Mn(2+) is required as a cofactor.

It is found in the cytoplasm. The catalysed reaction is 2 D-alanine + ATP = D-alanyl-D-alanine + ADP + phosphate + H(+). Its pathway is cell wall biogenesis; peptidoglycan biosynthesis. Its function is as follows. Cell wall formation. The polypeptide is D-alanine--D-alanine ligase (Corynebacterium glutamicum (strain R)).